The chain runs to 414 residues: Ribulose bisphosphate carboxylase/oxygenase activase (414 aa).

37 to 44 provides a ligand contact to ATP; sequence GRKGEGKT. A disordered region spans residues 296–326; that stretch reads RGYQTAPPPEAPVIQPVNNSSHKQKTSNTHL. Polar residues predominate over residues 311 to 326; that stretch reads PVNNSSHKQKTSNTHL.

This sequence belongs to the RuBisCO activase family.

In terms of biological role, activation of RuBisCO (ribulose-1,5-bisohosphate carboxylase/oxygenase; EC 4.1.1.39) involves the ATP-dependent carboxylation of the epsilon-amino group of lysine leading to a carbamate structure. This is Ribulose bisphosphate carboxylase/oxygenase activase (rca) from Nostoc sp. (strain PCC 7120 / SAG 25.82 / UTEX 2576).